Reading from the N-terminus, the 139-residue chain is Endoribonuclease YbeY (139 aa).

Zn(2+)-binding residues include His-105, His-109, and Asp-115.

It belongs to the endoribonuclease YbeY family. Requires Zn(2+) as cofactor.

The protein localises to the cytoplasm. Functionally, single strand-specific metallo-endoribonuclease involved in late-stage 70S ribosome quality control and in maturation of the 3' terminus of the 16S rRNA. In Flavobacterium johnsoniae (strain ATCC 17061 / DSM 2064 / JCM 8514 / BCRC 14874 / CCUG 350202 / NBRC 14942 / NCIMB 11054 / UW101) (Cytophaga johnsonae), this protein is Endoribonuclease YbeY.